The following is an 87-amino-acid chain: Translation initiation factor IF-1 2 (87 aa).

Residues 1-72 (MAKEEVIEME…TKGRINFRHK (72 aa)) enclose the S1-like domain.

This sequence belongs to the IF-1 family. In terms of assembly, component of the 30S ribosomal translation pre-initiation complex which assembles on the 30S ribosome in the order IF-2 and IF-3, IF-1 and N-formylmethionyl-tRNA(fMet); mRNA recruitment can occur at any time during PIC assembly.

Its subcellular location is the cytoplasm. In terms of biological role, one of the essential components for the initiation of protein synthesis. Stabilizes the binding of IF-2 and IF-3 on the 30S subunit to which N-formylmethionyl-tRNA(fMet) subsequently binds. Helps modulate mRNA selection, yielding the 30S pre-initiation complex (PIC). Upon addition of the 50S ribosomal subunit IF-1, IF-2 and IF-3 are released leaving the mature 70S translation initiation complex. The protein is Translation initiation factor IF-1 2 of Thiobacillus denitrificans (strain ATCC 25259 / T1).